Consider the following 61-residue polypeptide: Metallothionein-2 (61 aa).

M1 carries the post-translational modification N-acetylmethionine. The segment at 1–29 (MDPNCSCAAGDSCTCAGSCKCKECKCTSC) is beta. A divalent metal cation is bound by residues C5, C7, C13, C15, C19, C21, C24, C26, C29, C33, C34, C36, C37, C41, C44, C48, C50, and C57. The tract at residues 30 to 61 (KKSCCSCCPVGCAKCAQGCICKGASDKCSCCA) is alpha. At S58 the chain carries Phosphoserine. Positions 59 and 60 each coordinate a divalent metal cation.

Belongs to the metallothionein superfamily. Type 1 family. Interacts with EOLA1.

Its function is as follows. Metallothioneins have a high content of cysteine residues that bind various heavy metals; these proteins are transcriptionally regulated by both heavy metals and glucocorticoids. This is Metallothionein-2 from Homo sapiens (Human).